The chain runs to 323 residues: Phosphate acetyltransferase (323 aa).

This sequence belongs to the phosphate acetyltransferase and butyryltransferase family.

It is found in the cytoplasm. The enzyme catalyses acetyl-CoA + phosphate = acetyl phosphate + CoA. Its pathway is metabolic intermediate biosynthesis; acetyl-CoA biosynthesis; acetyl-CoA from acetate: step 2/2. This is Phosphate acetyltransferase (pta) from Bacillus subtilis (strain 168).